Here is a 360-residue protein sequence, read N- to C-terminus: Glutamine synthetase (360 aa).

Residues 26 to 105 (IMAEYIWIDA…VLSECWNADG (80 aa)) enclose the GS beta-grasp domain. Residues 112 to 360 (YRHECAKLME…METIYGSVDN (249 aa)) form the GS catalytic domain.

It belongs to the glutamine synthetase family. In terms of assembly, homooctamer.

It is found in the cytoplasm. The catalysed reaction is L-glutamate + NH4(+) + ATP = L-glutamine + ADP + phosphate + H(+). The chain is Glutamine synthetase (GLN1) from Colletotrichum gloeosporioides (Anthracnose fungus).